The primary structure comprises 308 residues: Pseudouridine-5'-phosphate glycosidase (308 aa).

The active-site Proton donor is glutamate 28. Positions 89 and 109 each coordinate substrate. Aspartate 141 contributes to the Mn(2+) binding site. 143–145 (SAD) is a binding site for substrate. Lysine 162 functions as the Nucleophile in the catalytic mechanism.

It belongs to the pseudouridine-5'-phosphate glycosidase family. In terms of assembly, homotrimer. Mn(2+) is required as a cofactor.

It catalyses the reaction D-ribose 5-phosphate + uracil = psi-UMP + H2O. In terms of biological role, catalyzes the reversible cleavage of pseudouridine 5'-phosphate (PsiMP) to ribose 5-phosphate and uracil. Functions biologically in the cleavage direction, as part of a pseudouridine degradation pathway. The polypeptide is Pseudouridine-5'-phosphate glycosidase (Brachyspira hyodysenteriae (strain ATCC 49526 / WA1)).